The sequence spans 218 residues: Protein-methionine-sulfoxide reductase heme-binding subunit MsrQ (218 aa).

The next 5 membrane-spanning stretches (helical) occupy residues 14–34, 60–80, 86–106, 121–141, and 155–175; these read LVHAAALAPIALLGWQFWQVW, LLLITLAITPLRQLTGQAVVI, LGLYAFFYATVHLAAYLTLDL, PYITVGFAAWLLLMPLAITST, and LHMLIYPIGLLAVLHFWWLVK.

The protein belongs to the MsrQ family. Heterodimer of a catalytic subunit (MsrP) and a heme-binding subunit (MsrQ). Requires FMN as cofactor. Heme b is required as a cofactor.

It is found in the cell inner membrane. Part of the MsrPQ system that repairs oxidized periplasmic proteins containing methionine sulfoxide residues (Met-O), using respiratory chain electrons. Thus protects these proteins from oxidative-stress damage caused by reactive species of oxygen and chlorine generated by the host defense mechanisms. MsrPQ is essential for the maintenance of envelope integrity under bleach stress, rescuing a wide series of structurally unrelated periplasmic proteins from methionine oxidation. MsrQ provides electrons for reduction to the reductase catalytic subunit MsrP, using the quinone pool of the respiratory chain. This Xanthomonas axonopodis pv. citri (strain 306) protein is Protein-methionine-sulfoxide reductase heme-binding subunit MsrQ.